Consider the following 370-residue polypeptide: S-adenosylmethionine:tRNA ribosyltransferase-isomerase (370 aa).

This sequence belongs to the QueA family. As to quaternary structure, monomer.

It is found in the cytoplasm. The catalysed reaction is 7-aminomethyl-7-carbaguanosine(34) in tRNA + S-adenosyl-L-methionine = epoxyqueuosine(34) in tRNA + adenine + L-methionine + 2 H(+). It functions in the pathway tRNA modification; tRNA-queuosine biosynthesis. In terms of biological role, transfers and isomerizes the ribose moiety from AdoMet to the 7-aminomethyl group of 7-deazaguanine (preQ1-tRNA) to give epoxyqueuosine (oQ-tRNA). In Synechococcus sp. (strain WH7803), this protein is S-adenosylmethionine:tRNA ribosyltransferase-isomerase.